A 259-amino-acid polypeptide reads, in one-letter code: MEIFKVIFLGIIQGLTEFLPISSSGHLVLFQELLGINTDQITLDVFLHFGTVIPVLIIFWDDVRDIIFFKKEKRWLTILILVGIIPTGIIGILFEDFFANLFSSVKTVGFMLLVTGFLLYLSEKLSNYNKELKEMQYHNALIVGVAQGMAIIPGISRSGSTIVASLLQGFDRDAAARYSFLLSAPVIFGAGLVELKDALSTGLEQLTWLSIIIGTIFAALSGYFAIKYLLYILRKGKLTVFAYYCWIVGIMIIILAGIF.

Helical transmembrane passes span 1–21, 40–60, 75–95, 101–121, 179–199, 206–226, and 239–259; these read MEIF…FLPI, QITL…IIFW, WLTI…ILFE, LFSS…LLYL, SFLL…KDAL, LTWL…YFAI, and TVFA…AGIF.

It belongs to the UppP family.

Its subcellular location is the cell inner membrane. It catalyses the reaction di-trans,octa-cis-undecaprenyl diphosphate + H2O = di-trans,octa-cis-undecaprenyl phosphate + phosphate + H(+). Its function is as follows. Catalyzes the dephosphorylation of undecaprenyl diphosphate (UPP). Confers resistance to bacitracin. The polypeptide is Undecaprenyl-diphosphatase (Halothermothrix orenii (strain H 168 / OCM 544 / DSM 9562)).